The chain runs to 314 residues: Protein REGULATOR OF FATTY ACID COMPOSITION 3, chloroplastic (314 aa).

A chloroplast-targeting transit peptide spans 1-47 (MESLLHASSSLVSLRPRIDGRDSFINPSRVCLNPSLGRRGSKPLPLV). Disordered stretches follow at residues 49 to 73 (AAKK…ATGP) and 214 to 314 (AITE…NVGG). Residues 56–69 (KKDDNHNFSARPDE) show a composition bias toward basic and acidic residues. Acidic residues-rich tracts occupy residues 233–269 (EYYD…DDDG) and 277–294 (GDEE…EQEE). Over residues 295-308 (GQDKSTNGRRETRR) the composition is skewed to basic and acidic residues.

Belongs to the bacterial ribosomal protein bS6 family. In terms of assembly, interacts with CFM3B/SPRT2 in plastids. In terms of tissue distribution, expressed ubiquitously in roots, leaves, stems, flower buds, flowers and siliques.

It localises to the plastid. Its subcellular location is the chloroplast. Prevents non-specific action of the splicing factor CFM3b during plastid rRNA biogenesis to improve the accuracy of plastid rRNA processing. Required for plastid functions such as photosynthesis, intracellular distribution, plastid rRNAs biosynthesis and plastid gene expression in roots. Involved in a sucrose-conditional process important for the organization of root lateral and apical meristems (e.g. establishment of RAM from pericycle and symplasmic connectivity), and subsequent primary and lateral roots development. Modulates C18 unsaturated fatty acid metabolism. This chain is Protein REGULATOR OF FATTY ACID COMPOSITION 3, chloroplastic, found in Arabidopsis thaliana (Mouse-ear cress).